Consider the following 2126-residue polypeptide: Phthioceranic/hydroxyphthioceranic acid synthase (2126 aa).

The Ketosynthase family 3 (KS3) domain occupies 24 to 447 (VTPVAVIGMA…GTNVHAVVEQ (424 aa)). Cys-196 (acyl-thioester intermediate; for beta-ketoacyl synthase activity) is an active-site residue. Residues His-331 and His-367 each act as for beta-ketoacyl synthase activity in the active site. The interval 449–549 (PQTEAQPHAA…VYQPAVGQDD (101 aa)) is linker domain (LD). Residues 550–849 (RGPVWLFSGQ…VAALAGMRRE (300 aa)) are acyltransferase (AT). Catalysis depends on Ser-641, which acts as the Acyl-ester intermediate; for acyltransferase activity. The interval 909–1191 (STVAVHPLLG…LAVCGLRIGT (283 aa)) is dehydratase (DH). The N-terminal hotdog fold stretch occupies residues 914-1032 (HPLLGAHVRL…RRASAVLQQV (119 aa)). The 285-residue stretch at 914–1198 (HPLLGAHVRL…IGTGVSERDK (285 aa)) folds into the PKS/mFAS DH domain. His-947 functions as the Proton acceptor; for dehydratase activity in the catalytic mechanism. The segment at 1051–1198 (PCRVDGEDLR…IGTGVSERDK (148 aa)) is C-terminal hotdog fold. The Proton donor; for dehydratase activity role is filled by Asp-1115. The tract at residues 1227–1398 (KWLLISDCAA…SEEDETAWRD (172 aa)) is pseudo beta-ketoacyl reductase (PsiKR). The enoylreductase (ER) stretch occupies residues 1426-1750 (SGMRLQIRTP…EHTGKLVLHI (325 aa)). Residues 1772–2019 (GSYIITGGLG…AERSRFFEVF (248 aa)) are beta-ketoacyl reductase (KR). NADP(+) contacts are provided by residues 1780 to 1783 (LGGL), 1803 to 1806 (SRTQ), 1831 to 1832 (DI), and 1904 to 1905 (FS). Positions 2040-2126 (DEWPARLRQL…DAPAAALSSQ (87 aa)) constitute a Carrier domain. Ser-2075 carries the O-(pantetheine 4'-phosphoryl)serine modification.

Requires pantetheine 4'-phosphate as cofactor.

The enzyme catalyses hexadecanoyl-[(hydroxy)phthioceranic acid synthase] + 7 (S)-methylmalonyl-CoA + 14 NADPH + 21 H(+) = C37-phthioceranyl-[(hydroxy)phthioceranic acid synthase] + 7 CO2 + 14 NADP(+) + 7 CoA + 7 H2O. It catalyses the reaction hexadecanoyl-[(hydroxy)phthioceranic acid synthase] + 8 (S)-methylmalonyl-CoA + 16 NADPH + 24 H(+) = C40-phthioceranyl-[(hydroxy)phthioceranic acid synthase] + 8 CO2 + 16 NADP(+) + 8 CoA + 8 H2O. The polypeptide is Phthioceranic/hydroxyphthioceranic acid synthase (pks2) (Mycobacterium bovis (strain BCG / Pasteur 1173P2)).